We begin with the raw amino-acid sequence, 537 residues long: Chaperonin GroEL (537 aa).

ATP contacts are provided by residues 29–32, 86–90, glycine 413, and aspartate 492; these read TLGP and DGTTT.

It belongs to the chaperonin (HSP60) family. As to quaternary structure, forms a cylinder of 14 subunits composed of two heptameric rings stacked back-to-back. Interacts with the co-chaperonin GroES.

It localises to the cytoplasm. It carries out the reaction ATP + H2O + a folded polypeptide = ADP + phosphate + an unfolded polypeptide.. Its function is as follows. Together with its co-chaperonin GroES, plays an essential role in assisting protein folding. The GroEL-GroES system forms a nano-cage that allows encapsulation of the non-native substrate proteins and provides a physical environment optimized to promote and accelerate protein folding. The protein is Chaperonin GroEL of Dehalococcoides mccartyi (strain ATCC BAA-2100 / JCM 16839 / KCTC 5957 / BAV1).